The sequence spans 1103 residues: Mediator of RNA polymerase II transcription subunit 14 (1103 aa).

Disordered stretches follow at residues 1–63, 120–140, and 1054–1103; these read MPGV…GYKQ, VPPQDSGPLPGAPNGKPLGNQ, and LETK…ITID. Residues 1073–1103 are compositionally biased toward polar residues; it reads SGNTVQNARLENKSPQKAAATHSNADVITID.

The protein belongs to the Mediator complex subunit 14 family. In terms of assembly, component of the Mediator complex.

The protein resides in the nucleus. In terms of biological role, component of the Mediator complex, a coactivator involved in the regulated transcription of nearly all RNA polymerase II-dependent genes. Mediator functions as a bridge to convey information from gene-specific regulatory proteins to the basal RNA polymerase II transcription machinery. Mediator is recruited to promoters by direct interactions with regulatory proteins and serves as a scaffold for the assembly of a functional preinitiation complex with RNA polymerase II and the general transcription factors. This is Mediator of RNA polymerase II transcription subunit 14 (rgr1) from Aspergillus terreus (strain NIH 2624 / FGSC A1156).